Here is a 422-residue protein sequence, read N- to C-terminus: Acylglycerol kinase, mitochondrial (422 aa).

An N6-acetyllysine modification is found at Lys-6. Positions 15–31 (TTAGLCLLTWGGHWLYG) are hydrophobic. In terms of domain architecture, DAGKc spans 58-199 (AQVKKATVFL…LDVLQIKGEK (142 aa)). Residues 249 to 271 (QASISYTGPTERPPNEPEETPVQ) form a disordered region.

This sequence belongs to the AGK family. As to quaternary structure, component of the TIM22 complex, which core is composed of TIMM22, associated with TIMM10 (TIMM10A and/or TIMM10B), TIMM9, AGK and TIMM29. Interacts with SMIM26. The cofactor is Mg(2+). Highly expressed in muscle, heart, kidney and brain.

The protein resides in the mitochondrion inner membrane. Its subcellular location is the mitochondrion intermembrane space. The enzyme catalyses a monoacylglycerol + ATP = a monoacyl-sn-glycero-3-phosphate + ADP + H(+). It carries out the reaction a 1,2-diacyl-sn-glycerol + ATP = a 1,2-diacyl-sn-glycero-3-phosphate + ADP + H(+). The catalysed reaction is an N-acylsphing-4-enine + ATP = an N-acylsphing-4-enine 1-phosphate + ADP + H(+). It catalyses the reaction 1-(9Z-octadecenoyl)-sn-glycerol + ATP = 1-(9Z-octadecenoyl)-sn-glycero-3-phosphate + ADP + H(+). The enzyme catalyses 1,2-di-(9Z-octadecenoyl)-sn-glycerol + ATP = 1,2-di-(9Z-octadecenoyl)-sn-glycero-3-phosphate + ADP + H(+). It carries out the reaction a 1-acyl-sn-glycerol + ATP = a 1-acyl-sn-glycero-3-phosphate + ADP + H(+). The catalysed reaction is 1-hexadecanoyl-sn-glycerol + ATP = 1-hexadecanoyl-sn-glycero-3-phosphate + ADP + H(+). It catalyses the reaction a 2-acylglycerol + ATP = a 2-acyl-sn-glycerol 3-phosphate + ADP + H(+). The enzyme catalyses 2-(5Z,8Z,11Z,14Z-eicosatetraenoyl)-glycerol + ATP = 2-(5Z,8Z,11Z,14Z-eicosatetraenoyl)-sn-glycero-3-phosphate + ADP + H(+). It carries out the reaction 1-(5Z,8Z,11Z,14Z-eicosatetraenoyl)-sn-glycerol + ATP = 1-(5Z,8Z,11Z,14Z-eicosatetraenoyl)-sn-glycero-3-phosphate + ADP + H(+). The catalysed reaction is N-(hexanoyl)sphing-4-enine + ATP = N-hexanoylsphing-4-enine 1-phosphate + ADP + H(+). Its pathway is lipid metabolism; glycerolipid metabolism. Lipid kinase that can phosphorylate both monoacylglycerol and diacylglycerol to form lysophosphatidic acid (LPA) and phosphatidic acid (PA), respectively. Does not phosphorylate sphingosine. Phosphorylates ceramide. Phosphorylates 1,2-dioleoylglycerol more rapidly than 2,3-dioleoylglycerol. Independently of its lipid kinase activity, acts as a component of the TIM22 complex. The TIM22 complex mediates the import and insertion of multi-pass transmembrane proteins into the mitochondrial inner membrane by forming a twin-pore translocase that uses the membrane potential as the external driving force. In the TIM22 complex, required for the import of a subset of metabolite carriers into mitochondria, such as ANT1/SLC25A4 and SLC25A24, while it is not required for the import of TIMM23. Overexpression increases the formation and secretion of LPA, resulting in transactivation of EGFR and activation of the downstream MAPK signaling pathway, leading to increased cell growth. This chain is Acylglycerol kinase, mitochondrial, found in Homo sapiens (Human).